The sequence spans 592 residues: MPSRTDPKMDRSGGRVRLKAHYGGDILITSVDAMTTFKDLCEEVRDMCGLHQQHPLTLKWVDSEGDPCTVSSQMELEEAFRLVCQGRDEVLIIHVFPSIPEQPGMPCPGEDKSIYRRGARRWRKLYRANGHLFQAKRFNRGAYCGQCSERIWGLSRQGYRCINCKLLVHKRCHVLVPLTCRRHMDSVMPSQEPPVDDKNDGVDLPSEETDGIAYISSSRKHDNIKDDSEDLKPVIDGVDGIKISQGLGLQDFDLIRVIGRGSYAKVLLVRLKKNDQIYAMKVVKKELVHDDEDIDWVQTEKHVFEQASSNPFLVGLHSCFQTTSRLFLVIEYVNGGDLMFHMQRQRKLPEEHARFYAAEICIALNFLHERGIIYRDLKLDNVLLDADGHIKLTDYGMCKEGLGPGDTTSTFCGTPNYIAPEILRGEEYGFSVDWWALGVLMFEMMAGRSPFDIITDNPDMNTEDYLFQVILEKPIRIPRFLSVKASHVLKGFLNKDPKERLGCRPQTGFSDIKSHAFFRSIDWDLLEKKQTLPPFQPQITDDYGLDNFDTQFTSEPVQLTPDDEDVIKRIDQSEFEGFEYINPLLLSAEESV.

One can recognise a PB1 domain in the interval 15-98 (RVRLKAHYGG…EVLIIHVFPS (84 aa)). The tract at residues 79–145 (AFRLVCQGRD…KRFNRGAYCG (67 aa)) is interaction with SQSTM1. The Phorbol-ester/DAG-type zinc finger occupies 130 to 180 (GHLFQAKRFNRGAYCGQCSERIWGLSRQGYRCINCKLLVHKRCHVLVPLTC). One can recognise a Protein kinase domain in the interval 252–518 (FDLIRVIGRG…FSDIKSHAFF (267 aa)). Residues 258-266 (IGRGSYAKV) and K281 each bind ATP. Catalysis depends on D376, which acts as the Proton acceptor. A Phosphothreonine; by PDPK1 and PI3K modification is found at T410. One can recognise an AGC-kinase C-terminal domain in the interval 519–590 (RSIDWDLLEK…INPLLLSAEE (72 aa)). T560 bears the Phosphothreonine mark. At S591 the chain carries Phosphoserine.

Belongs to the protein kinase superfamily. AGC Ser/Thr protein kinase family. PKC subfamily. Interacts directly with SQSTM1. Forms a ternary complex with SQSTM1 and KCNAB2. Forms another ternary complex with SQSTM1 and GABRR3. Forms a complex with SQSTM1 and MAP2K5. Interacts with PARD6A, PARD6B and PARD6G. Part of a complex with PARD3, PARD6A or PARD6B or PARD6G and CDC42 or RAC1. Interacts with ADAP1/CENTA1. Interacts (via the protein kinase domain) with WWC1. Forms a tripartite complex with WWC1 and DDR1, but predominantly in the absence of collagen. Interacts with PDPK1 (via N-terminal region). Interacts with WDFY2 (via WD repeats 1-3). Interacts with VAMP2. Forms a complex with WDFY2 and VAMP2. Interacts with APPL1. Interacts with WWC1, WWC2 and WWC3. In terms of processing, CDH5 is required for its phosphorylation at Thr-410. Phosphorylated by protein kinase PDPK1; phosphorylation is inhibited by the apoptotic C-terminal cleavage product of PKN2. Phosphorylation at Thr-410 by PI3K activates the kinase. Isoform 1: In brain, highly expressed in cerebellar granule neurons and cerebellar astrocytes (at protein level). Expressed at low levels in testes, lung and kidney. Isoform 2: Specifically expressed in brain where it localizes to cerebellar granule neurons (at protein level).

It localises to the cytoplasm. The protein resides in the endosome. Its subcellular location is the cell junction. The protein localises to the membrane. It catalyses the reaction L-seryl-[protein] + ATP = O-phospho-L-seryl-[protein] + ADP + H(+). The enzyme catalyses L-threonyl-[protein] + ATP = O-phospho-L-threonyl-[protein] + ADP + H(+). Atypical PKCs (PRKCI and PRKCZ) exhibit an elevated basal enzymatic activity (that may be due to the interaction with SMG1 or SQSTM1) and are not regulated by diacylglycerol, phosphatidylserine, phorbol esters or calcium ions. Two specific sites, Thr-410 (activation loop of the kinase domain) and Thr-560 (turn motif), need to be phosphorylated for its full activation. Phosphatidylinositol 3,4,5-trisphosphate might be a physiological activator. Isoform 2: Constitutively active. In terms of biological role, calcium- and diacylglycerol-independent serine/threonine-protein kinase that functions in phosphatidylinositol 3-kinase (PI3K) pathway and mitogen-activated protein (MAP) kinase cascade, and is involved in NF-kappa-B activation, mitogenic signaling, cell proliferation, cell polarity, inflammatory response and maintenance of long-term potentiation (LTP). Upon lipopolysaccharide (LPS) treatment in macrophages, or following mitogenic stimuli, functions downstream of PI3K to activate MAP2K1/MEK1-MAPK1/ERK2 signaling cascade independently of RAF1 activation. Required for insulin-dependent activation of AKT3, but may function as an adapter rather than a direct activator. Upon insulin treatment may act as a downstream effector of PI3K and contribute to the activation of translocation of the glucose transporter SLC2A4/GLUT4 and subsequent glucose transport in adipocytes. In EGF-induced cells, binds and activates MAP2K5/MEK5-MAPK7/ERK5 independently of its kinase activity and can activate JUN promoter through MEF2C. Through binding with SQSTM1/p62, functions in interleukin-1 signaling and activation of NF-kappa-B with the specific adapters RIPK1 and TRAF6. Participates in TNF-dependent transactivation of NF-kappa-B by phosphorylating and activating IKBKB kinase, which in turn leads to the degradation of NF-kappa-B inhibitors. In migrating astrocytes, forms a cytoplasmic complex with PARD6A and is recruited by CDC42 to function in the establishment of cell polarity along with the microtubule motor and dynein. In association with FEZ1, stimulates neuronal differentiation in PC12 cells. In the inflammatory response, is required for the T-helper 2 (Th2) differentiation process, including interleukin production, efficient activation of JAK1 and the subsequent phosphorylation and nuclear translocation of STAT6. May be involved in development of allergic airway inflammation (asthma), a process dependent on Th2 immune response. In the NF-kappa-B-mediated inflammatory response, can relieve SETD6-dependent repression of NF-kappa-B target genes by phosphorylating the RELA subunit at 'Ser-311'. Phosphorylates VAMP2 in vitro. Phosphorylates and activates LRRK1, which phosphorylates RAB proteins involved in intracellular trafficking. Functionally, involved in late synaptic long term potentiation phase in CA1 hippocampal cells and long term memory maintenance. The sequence is that of Protein kinase C zeta type (Prkcz) from Mus musculus (Mouse).